A 276-amino-acid chain; its full sequence is Large ribosomal subunit protein uL2 (276 aa).

Residues 219 to 268 (TVRGSVMNPNDHPHGGGEGRQPVGRKSPMTPWGKPALGLKTRNKKAKSSK) form a disordered region.

The protein belongs to the universal ribosomal protein uL2 family. As to quaternary structure, part of the 50S ribosomal subunit. Forms a bridge to the 30S subunit in the 70S ribosome.

Functionally, one of the primary rRNA binding proteins. Required for association of the 30S and 50S subunits to form the 70S ribosome, for tRNA binding and peptide bond formation. It has been suggested to have peptidyltransferase activity; this is somewhat controversial. Makes several contacts with the 16S rRNA in the 70S ribosome. The protein is Large ribosomal subunit protein uL2 of Lactococcus lactis subsp. cremoris (strain MG1363).